Consider the following 483-residue polypeptide: Regulatory protein ViaA (483 aa).

It belongs to the ViaA family. Homodimer. Interacts with RavA.

It is found in the cytoplasm. Its function is as follows. Component of the RavA-ViaA chaperone complex, which may act on the membrane to optimize the function of some of the respiratory chains. ViaA stimulates the ATPase activity of RavA. The sequence is that of Regulatory protein ViaA from Escherichia coli O81 (strain ED1a).